Consider the following 147-residue polypeptide: Endoribonuclease YbeY (147 aa).

Residues H109, H113, and H119 each coordinate Zn(2+).

Belongs to the endoribonuclease YbeY family. Requires Zn(2+) as cofactor.

The protein resides in the cytoplasm. Its function is as follows. Single strand-specific metallo-endoribonuclease involved in late-stage 70S ribosome quality control and in maturation of the 3' terminus of the 16S rRNA. The chain is Endoribonuclease YbeY from Magnetococcus marinus (strain ATCC BAA-1437 / JCM 17883 / MC-1).